The chain runs to 156 residues: Small ribosomal subunit protein uS7 (156 aa).

The protein belongs to the universal ribosomal protein uS7 family. Part of the 30S ribosomal subunit. Contacts proteins S9 and S11.

In terms of biological role, one of the primary rRNA binding proteins, it binds directly to 16S rRNA where it nucleates assembly of the head domain of the 30S subunit. Is located at the subunit interface close to the decoding center, probably blocks exit of the E-site tRNA. In Chromohalobacter salexigens (strain ATCC BAA-138 / DSM 3043 / CIP 106854 / NCIMB 13768 / 1H11), this protein is Small ribosomal subunit protein uS7.